A 373-amino-acid chain; its full sequence is UPF0725 protein At1g23950 (373 aa).

Residue Thr-2 is modified to N-acetylthreonine.

It belongs to the UPF0725 (EMB2204) family.

This is UPF0725 protein At1g23950 from Arabidopsis thaliana (Mouse-ear cress).